The following is a 478-amino-acid chain: Dihydrolipoyl dehydrogenase (478 aa).

Residues 34–49, Lys-58, and Gly-122 each bind FAD; that span reads EKYI…GGTC. Cys-49 and Cys-54 form a disulfide bridge. NAD(+) is bound by residues 188 to 192, Glu-211, Val-245, and 276 to 279; these read GAGVI and AVGR. Asp-319 and Ala-327 together coordinate FAD. His-451 acts as the Proton acceptor in catalysis.

The protein belongs to the class-I pyridine nucleotide-disulfide oxidoreductase family. As to quaternary structure, homodimer. FAD is required as a cofactor.

It localises to the cytoplasm. The enzyme catalyses N(6)-[(R)-dihydrolipoyl]-L-lysyl-[protein] + NAD(+) = N(6)-[(R)-lipoyl]-L-lysyl-[protein] + NADH + H(+). In terms of biological role, the branched-chain alpha-keto dehydrogenase complex catalyzes the overall conversion of alpha-keto acids to acyl-CoA and CO(2). It contains multiple copies of 3 enzymatic components: branched-chain alpha-keto acid decarboxylase (E1), lipoamide acyltransferase (E2) and lipoamide dehydrogenase (E3). Also acts in the glycine cleavage system. This chain is Dihydrolipoyl dehydrogenase (lpdG), found in Pseudomonas aeruginosa (strain ATCC 15692 / DSM 22644 / CIP 104116 / JCM 14847 / LMG 12228 / 1C / PRS 101 / PAO1).